Here is a 701-residue protein sequence, read N- to C-terminus: Peptide transporter CstA (701 aa).

The Cytoplasmic portion of the chain corresponds to 1 to 6 (MNKSGK). Residues 7–27 (YLVWTVLSVMGAFALGYIALN) traverse the membrane as a helical segment. The Periplasmic portion of the chain corresponds to 28-33 (RGEQIN). A helical transmembrane segment spans residues 34 to 54 (ALWIVVASVCIYLIAYRFYGL). At 55–86 (YIAKNVLAVDPTRMTPAVRHNDGLDYVPTDKK) the chain is on the cytoplasmic side. A helical transmembrane segment spans residues 87-107 (VLFGHHFAAIAGAGPLVGPVL). At 108–117 (AAQMGYLPGM) the chain is on the periplasmic side. A helical transmembrane segment spans residues 118–138 (IWLLAGVVLAGAVQDFMVLFV). Residues 139-160 (STRRDGRSLGELVKEEMGPTAG) are Cytoplasmic-facing. A helical membrane pass occupies residues 161–181 (VIALVACFMIMVIILAVLAMI). At 182-189 (VVKALTHS) the chain is on the periplasmic side. Residues 190 to 210 (PWGTYTVAFTIPLALFMGIYL) form a helical membrane-spanning segment. Over 211 to 217 (RYLRPGR) the chain is Cytoplasmic. Residues 218-238 (IGEVSVIGLVFLIFAIISGGW) traverse the membrane as a helical segment. Topologically, residues 239 to 255 (VAESPTWAPYFDFTGVQ) are periplasmic. A helical membrane pass occupies residues 256–276 (LTWMLVGYGFVAAVLPVWLLL). The Cytoplasmic portion of the chain corresponds to 277-280 (APRD). A helical transmembrane segment spans residues 281 to 301 (YLSTFLKIGTIVGLAVGILIM). Over 302–324 (RPTLTMPALTKFVDGTGPVWTGN) the chain is Periplasmic. The helical transmembrane segment at 325-345 (LFPFLFITIACGAVSGFHALI) threads the bilayer. Over 346–372 (SSGTTPKMLANEGQACFIGYGGMLMES) the chain is Cytoplasmic. The chain crosses the membrane as a helical span at residues 373–393 (FVAIMALVSACIIDPGVYFAM). Over 394-395 (NS) the chain is Periplasmic. The helical transmembrane segment at 396–416 (PMAVLAPAGTADVVASAAQVV) threads the bilayer. Residues 417 to 439 (SSWGFSITPDTLNQIASEVGEQS) lie on the Cytoplasmic side of the membrane. The helical transmembrane segment at 440–460 (IISRAGGAPTLAVGMAYILHG) threads the bilayer. The Periplasmic portion of the chain corresponds to 461–463 (ALG). A helical transmembrane segment spans residues 464–484 (GMMDVAFWYHFAILFEALFIL). The Cytoplasmic portion of the chain corresponds to 485–523 (TAVDAGTRAARFMLQDLLGVVSPGLKRTDSLPANLLATA). A helical transmembrane segment spans residues 524–544 (LCVLAWGYFLHQGVVDPLGGI). Residues 545 to 550 (NTLWPL) lie on the Periplasmic side of the membrane. Residues 551–571 (FGIANQMLAGMALMLCAVVLF) form a helical membrane-spanning segment. The Cytoplasmic portion of the chain corresponds to 572–577 (KMKRQR). A helical transmembrane segment spans residues 578-598 (YAWVALVPTAWLLICTLTAGW). At 599–643 (QKAFSPDAKVGFLAIANKFQAMIDSGNIPSQYTESQLAQLVFNNR) the chain is on the periplasmic side. Residues 644-664 (LDAGLTIFFMVVVVVLALFSI) form a helical membrane-spanning segment. Topologically, residues 665-701 (KTALAALKDPKPTAKETPYEPMPENVEEIVAQAKGAH) are cytoplasmic.

It belongs to the peptide transporter carbon starvation (CstA) (TC 2.A.114) family.

It is found in the cell inner membrane. In terms of biological role, involved in peptide utilization during carbon starvation. The protein is Peptide transporter CstA of Escherichia coli (strain K12).